A 140-amino-acid chain; its full sequence is Nucleoside diphosphate kinase (140 aa).

ATP is bound by residues Lys-11, Phe-59, Arg-87, Thr-93, Arg-104, and Asn-114. The active-site Pros-phosphohistidine intermediate is His-117.

Belongs to the NDK family. Homotetramer. Requires Mg(2+) as cofactor.

The protein resides in the cytoplasm. The catalysed reaction is a 2'-deoxyribonucleoside 5'-diphosphate + ATP = a 2'-deoxyribonucleoside 5'-triphosphate + ADP. The enzyme catalyses a ribonucleoside 5'-diphosphate + ATP = a ribonucleoside 5'-triphosphate + ADP. Major role in the synthesis of nucleoside triphosphates other than ATP. The ATP gamma phosphate is transferred to the NDP beta phosphate via a ping-pong mechanism, using a phosphorylated active-site intermediate. This is Nucleoside diphosphate kinase from Rickettsia typhi (strain ATCC VR-144 / Wilmington).